Reading from the N-terminus, the 430-residue chain is Aspartate aminotransferase, mitochondrial (430 aa).

The N-terminal 29 residues, 1–29 (MALLHSGRVLSGMAAAFHPGLAAAASARA), are a transit peptide targeting the mitochondrion. Thr48 carries the phosphothreonine modification. Position 59 is an N6-acetyllysine (Lys59). Gly65 serves as a coordination point for substrate. The residue at position 73 (Lys73) is an N6-acetyllysine; alternate. Lys73 carries the N6-succinyllysine; alternate modification. N6-acetyllysine is present on Lys82. Lys90 carries the N6-acetyllysine; alternate modification. Position 90 is an N6-succinyllysine; alternate (Lys90). Position 96 is a 3'-nitrotyrosine; alternate (Tyr96). Tyr96 is subject to Phosphotyrosine; alternate. 2 positions are modified to N6-acetyllysine; alternate: Lys107 and Lys122. N6-succinyllysine; alternate is present on residues Lys107 and Lys122. Ser143 carries the phosphoserine modification. An N6-acetyllysine; alternate modification is found at Lys159. Lys159 carries the N6-succinyllysine; alternate modification. Trp162 provides a ligand contact to substrate. At Lys185 the chain carries N6-acetyllysine; alternate. Lys185 is subject to N6-succinyllysine; alternate. Asn215 is a binding site for substrate. N6-succinyllysine is present on Lys227. Lys234 is modified (N6-acetyllysine). An N6-acetyllysine; alternate mark is found at Lys279 and Lys296. Lys279 is subject to N6-(pyridoxal phosphate)lysine; alternate. Lys296 carries the N6-succinyllysine; alternate modification. Lys302 carries the post-translational modification N6-acetyllysine. Residue Lys309 is modified to N6-acetyllysine; alternate. An N6-succinyllysine; alternate modification is found at Lys309. Arg313 carries the asymmetric dimethylarginine modification. Residue Lys338 is modified to N6-acetyllysine; alternate. The residue at position 338 (Lys338) is an N6-succinyllysine; alternate. N6-acetyllysine is present on Lys345. Lys363 bears the N6-acetyllysine; alternate mark. The residue at position 363 (Lys363) is an N6-succinyllysine; alternate. N6-acetyllysine is present on residues Lys364 and Lys387. Residues Lys396 and Lys404 each carry the N6-acetyllysine; alternate modification. Residues Lys396 and Lys404 each carry the N6-succinyllysine; alternate modification. A substrate-binding site is contributed by Arg407.

It belongs to the class-I pyridoxal-phosphate-dependent aminotransferase family. In terms of assembly, homodimer. Requires pyridoxal 5'-phosphate as cofactor. In terms of tissue distribution, expressed in all tissues tested: liver, pancreas, kidney, heart, spleen, arterioles, and lymphocytes.

It is found in the mitochondrion matrix. It localises to the cell membrane. It carries out the reaction L-aspartate + 2-oxoglutarate = oxaloacetate + L-glutamate. The enzyme catalyses L-kynurenine + 2-oxoglutarate = kynurenate + L-glutamate + H2O. Functionally, catalyzes the irreversible transamination of the L-tryptophan metabolite L-kynurenine to form kynurenic acid (KA). As a member of the malate-aspartate shuttle, it has a key role in the intracellular NAD(H) redox balance. Is important for metabolite exchange between mitochondria and cytosol, and for amino acid metabolism. Facilitates cellular uptake of long-chain free fatty acids. This Rattus norvegicus (Rat) protein is Aspartate aminotransferase, mitochondrial (Got2).